Consider the following 695-residue polypeptide: Elongation factor G (695 aa).

One can recognise a tr-type G domain in the interval Glu-8–Thr-282. GTP-binding positions include Ala-17–Thr-24, Asp-81–His-85, and Asn-135–Asp-138.

Belongs to the TRAFAC class translation factor GTPase superfamily. Classic translation factor GTPase family. EF-G/EF-2 subfamily.

It localises to the cytoplasm. In terms of biological role, catalyzes the GTP-dependent ribosomal translocation step during translation elongation. During this step, the ribosome changes from the pre-translocational (PRE) to the post-translocational (POST) state as the newly formed A-site-bound peptidyl-tRNA and P-site-bound deacylated tRNA move to the P and E sites, respectively. Catalyzes the coordinated movement of the two tRNA molecules, the mRNA and conformational changes in the ribosome. The sequence is that of Elongation factor G from Listeria welshimeri serovar 6b (strain ATCC 35897 / DSM 20650 / CCUG 15529 / CIP 8149 / NCTC 11857 / SLCC 5334 / V8).